Consider the following 127-residue polypeptide: Large ribosomal subunit protein bL17 (127 aa).

Belongs to the bacterial ribosomal protein bL17 family. As to quaternary structure, part of the 50S ribosomal subunit. Contacts protein L32.

The chain is Large ribosomal subunit protein bL17 from Lactobacillus delbrueckii subsp. bulgaricus (strain ATCC 11842 / DSM 20081 / BCRC 10696 / JCM 1002 / NBRC 13953 / NCIMB 11778 / NCTC 12712 / WDCM 00102 / Lb 14).